The sequence spans 433 residues: Signal recognition particle 54 kDa protein (433 aa).

GTP contacts are provided by residues 100–107 (GLQGSGKT), 180–184 (DTAGR), and 238–241 (TKFD).

This sequence belongs to the GTP-binding SRP family. SRP54 subfamily. As to quaternary structure, part of the signal recognition particle protein translocation system, which is composed of SRP and FtsY. Archaeal SRP consists of a 7S RNA molecule of 300 nucleotides and two protein subunits: SRP54 and SRP19.

The protein resides in the cytoplasm. It catalyses the reaction GTP + H2O = GDP + phosphate + H(+). Its function is as follows. Involved in targeting and insertion of nascent membrane proteins into the cytoplasmic membrane. Binds to the hydrophobic signal sequence of the ribosome-nascent chain (RNC) as it emerges from the ribosomes. The SRP-RNC complex is then targeted to the cytoplasmic membrane where it interacts with the SRP receptor FtsY. In Archaeoglobus fulgidus (strain ATCC 49558 / DSM 4304 / JCM 9628 / NBRC 100126 / VC-16), this protein is Signal recognition particle 54 kDa protein.